Reading from the N-terminus, the 440-residue chain is Lipopolysaccharide-processing protein LpsZ (440 aa).

It to E.coli capsule polysaccharide export protein KpsC.

It localises to the cytoplasm. Functionally, involved in the invasion of nitrogen fixation nodules. May be involved in the biosynthesis of lipopolysaccharides as an enzyme or a regulatory protein. This Rhizobium meliloti (Ensifer meliloti) protein is Lipopolysaccharide-processing protein LpsZ (lpsZ).